The sequence spans 65 residues: Large ribosomal subunit protein bL35 (65 aa).

The disordered stretch occupies residues Gly20 to Arg42.

The protein belongs to the bacterial ribosomal protein bL35 family.

The protein is Large ribosomal subunit protein bL35 of Syntrophus aciditrophicus (strain SB).